The primary structure comprises 546 residues: Chaperonin GroEL (546 aa).

ATP contacts are provided by residues 29–32, Lys-50, 86–90, Gly-415, and Asp-495; these read TLGP and DGTTT.

The protein belongs to the chaperonin (HSP60) family. Forms a cylinder of 14 subunits composed of two heptameric rings stacked back-to-back. Interacts with the co-chaperonin GroES.

The protein localises to the cytoplasm. It catalyses the reaction ATP + H2O + a folded polypeptide = ADP + phosphate + an unfolded polypeptide.. Together with its co-chaperonin GroES, plays an essential role in assisting protein folding. The GroEL-GroES system forms a nano-cage that allows encapsulation of the non-native substrate proteins and provides a physical environment optimized to promote and accelerate protein folding. This chain is Chaperonin GroEL, found in Parabacteroides distasonis (strain ATCC 8503 / DSM 20701 / CIP 104284 / JCM 5825 / NCTC 11152).